Here is a 347-residue protein sequence, read N- to C-terminus: MNPAIFTTIILTMILGTMIVTTSSHWLTVWIGFEMNMLAIIPILMKKYNPRSMEASTKYFLTQATASMLLMLAITINLVYSGQWSVTKPLTPMASITMTLAMAMKLGLSPFHFWVPEVTQGTQLSSGLILLTWQKLAPMSILYQISPTINLELLLMMAILSIAIGGWGGLNQTQLRKIMAYSSIAHMGWMTAIMAYNPAMTLLNLXVYILLTTTXFMMLMLNSSTTTLSLSHTWNKTPLLATTILLIMLSLGGLPPLSGFXPKWMIIQEMTKNDSIIMPTIMAMAALLNLYFYMRLTYSTSLTMFPSTNNMKMKWQFNSTKPMTYISPLIILSTLXLPLSPMLTLLE.

A run of 11 helical transmembrane segments spans residues 1–21 (MNPA…MIVT), 25–45 (HWLT…PILM), 59–79 (YFLT…INLV), 96–116 (ITMT…FWVP), 127–147 (GLIL…QISP), 149–169 (INLE…GWGG), 178–198 (IMAY…AYNP), 201–221 (TLLN…MLML), 240–260 (LATT…LSGF), 274–294 (DSII…YFYM), and 326–346 (ISPL…LTLL).

The protein belongs to the complex I subunit 2 family. In terms of assembly, core subunit of respiratory chain NADH dehydrogenase (Complex I) which is composed of 45 different subunits. Interacts with TMEM242.

Its subcellular location is the mitochondrion inner membrane. It carries out the reaction a ubiquinone + NADH + 5 H(+)(in) = a ubiquinol + NAD(+) + 4 H(+)(out). In terms of biological role, core subunit of the mitochondrial membrane respiratory chain NADH dehydrogenase (Complex I) which catalyzes electron transfer from NADH through the respiratory chain, using ubiquinone as an electron acceptor. Essential for the catalytic activity and assembly of complex I. This is NADH-ubiquinone oxidoreductase chain 2 from Dobsonia minor (Lesser bare-backed fruit bat).